The following is a 70-amino-acid chain: Large ribosomal subunit protein uL29 (70 aa).

Belongs to the universal ribosomal protein uL29 family.

The polypeptide is Large ribosomal subunit protein uL29 (Prochlorococcus marinus (strain MIT 9303)).